The primary structure comprises 341 residues: Ubiquinone biosynthesis protein COQ4, mitochondrial (341 aa).

A mitochondrion-targeting transit peptide spans Met-1–Gln-16. Zn(2+) contacts are provided by His-220, Asp-221, His-224, and Glu-236.

It belongs to the COQ4 family. Component of a multi-subunit COQ enzyme complex, composed of at least COQ3, COQ4, COQ5, COQ6, COQ7 and COQ9. Requires Zn(2+) as cofactor.

The protein resides in the mitochondrion inner membrane. It catalyses the reaction a 4-hydroxy-3-methoxy-5-(all-trans-polyprenyl)benzoate + H(+) = a 2-methoxy-6-(all-trans-polyprenyl)phenol + CO2. It functions in the pathway cofactor biosynthesis; ubiquinone biosynthesis. In terms of biological role, lyase that catalyzes the C1-decarboxylation of 4-hydroxy-3-methoxy-5-(all-trans-polyprenyl)benzoic acid into 2-methoxy-6-(all-trans-polyprenyl)phenol during ubiquinone biosynthesis. This is Ubiquinone biosynthesis protein COQ4, mitochondrial from Vanderwaltozyma polyspora (strain ATCC 22028 / DSM 70294 / BCRC 21397 / CBS 2163 / NBRC 10782 / NRRL Y-8283 / UCD 57-17) (Kluyveromyces polysporus).